The following is a 581-amino-acid chain: Arginine--tRNA ligase (581 aa).

The 'HIGH' region signature appears at 123-133 (PNVAKEMHVGH).

Belongs to the class-I aminoacyl-tRNA synthetase family. Monomer.

The protein localises to the cytoplasm. It catalyses the reaction tRNA(Arg) + L-arginine + ATP = L-arginyl-tRNA(Arg) + AMP + diphosphate. The polypeptide is Arginine--tRNA ligase (Blochmanniella pennsylvanica (strain BPEN)).